A 291-amino-acid chain; its full sequence is Protease HtpX homolog (291 aa).

2 helical membrane-spanning segments follow: residues 4 to 24 and 38 to 58; these read VFLFLITNLAVILVLSFSARL and MGMLLAFAALIGFGGSFISLL. Residue His144 coordinates Zn(2+). Glu145 is an active-site residue. His148 serves as a coordination point for Zn(2+). The next 2 helical transmembrane spans lie at 159-179 and 199-219; these read LIQGVVNTFVIFLARVFAYAL and ISSIAFEIVFGILASIVVMYF. Glu224 contacts Zn(2+).

Belongs to the peptidase M48B family. Zn(2+) serves as cofactor.

The protein localises to the cell inner membrane. In Chlorobium phaeovibrioides (strain DSM 265 / 1930) (Prosthecochloris vibrioformis (strain DSM 265)), this protein is Protease HtpX homolog.